Here is a 481-residue protein sequence, read N- to C-terminus: Acetyltransferase peniE (481 aa).

Catalysis depends on proton acceptor residues His164 and Asp411.

Belongs to the plant acyltransferase family. Monomer.

Acetyltransferase; part of the gene cluster that mediates the biosynthesis of penifulvin A, a potent insecticidal sesquiterpene that features a [5.5.5.6]dioxafenestrane ring. The first step of the pathway is performed by the sesquiterpene cyclase peniA that generates the angular triquinane scaffold silphinene via cyclization of the linear farnesyl pyrophosphate (FPP). The cytochrome P450 monooxygenase peniB and the flavin-dependent monooxygenase peniC then catalyze a series of oxidation reactions to transform silphinene into penifulvin A. The dioxygenases peniD and peniF, as well as the acetyltransferase peniE, do not seem to be involved in the biosynthesis of penifulvin A. In Penicillium patulum (Penicillium griseofulvum), this protein is Acetyltransferase peniE.